Here is a 104-residue protein sequence, read N- to C-terminus: Probable quinol monooxygenase YgiN (104 aa).

Positions 2-100 (LTVIAEIRTR…DVLEMNIRIL (99 aa)) constitute an ABM domain.

In terms of assembly, homodimer.

It catalyses the reaction menadiol + 2 O2 = menadione + 2 superoxide + 2 H(+). Functionally, can oxidize menadiol to menadione. In Escherichia coli O157:H7, this protein is Probable quinol monooxygenase YgiN (ygiN).